The chain runs to 396 residues: NAD(P)H oxidoreductase RTN4IP1, mitochondrial (396 aa).

The N-terminal 40 residues, 1–40 (MGFLKTCVFRRNACTAVCFWRSQVVQKPSVRKISTTSPRS), are a transit peptide targeting the mitochondrion. Residues 52-393 (GSNEVLRFTQ…RGHARGKTVI (342 aa)) form the Enoyl reductase (ER) domain. Residues Ser214, Gly216, Val217, Ser237, Tyr255, Asn276, Leu300, Ala341, Phe343, His386, Ala387, and Arg388 each coordinate NADPH.

Belongs to the zinc-containing alcohol dehydrogenase family. Quinone oxidoreductase subfamily. Interacts with RTN4, UQCRC1 and UQCRC2.

The protein resides in the mitochondrion matrix. Its subcellular location is the mitochondrion outer membrane. The enzyme catalyses a 3-demethylubiquinone + NADH + 2 H(+) = a 3-demethylubiquinol + NAD(+). It carries out the reaction a 3-demethylubiquinone + NADPH + 2 H(+) = a 3-demethylubiquinol + NADP(+). The catalysed reaction is 3-demethylubiquinone-10 + NADH + 2 H(+) = 3-demethylubiquinol-10 + NAD(+). It catalyses the reaction 3-demethylubiquinone-10 + NADPH + 2 H(+) = 3-demethylubiquinol-10 + NADP(+). It participates in cofactor biosynthesis; ubiquinone biosynthesis. Its function is as follows. NAD(P)H oxidoreductase involved in the ubiquinone biosynthetic pathway. Required for the O-methyltransferase activity of COQ3. Able to catalyze the oxidoreduction of 3-demethylubiquinone into 3-demethylubiquinol in vitro. However, it is unclear if 3-demethylubiquinone constitutes a substrate in vivo. May also play a role in the regulation of retinal ganglion cell (RGC) neurite outgrowth, and hence in the development of the inner retina and optic nerve. Appears to be a potent inhibitor of regeneration following spinal cord injury. The protein is NAD(P)H oxidoreductase RTN4IP1, mitochondrial (RTN4IP1) of Bos taurus (Bovine).